The primary structure comprises 669 residues: GTP-binding protein 1 (669 aa).

The segment at 1-32 (MAAERSRSPVDSPVPASMFAPEPSSPGAARAA) is disordered. Phosphoserine is present on residues serine 6, serine 8, serine 12, serine 24, serine 25, serine 44, serine 47, and serine 69. The 232-residue stretch at 158 to 389 (FLEVRVAVVG…LNLLSPRTSY (232 aa)) folds into the tr-type G domain. The interval 167-174 (GNVDAGKS) is G1. 167 to 174 (GNVDAGKS) serves as a coordination point for GTP. Residues 206–210 (GRTSS) form a G2 region. Residues 252–255 (DLAG) are G3. Residues 252–256 (DLAGH) and 308–311 (TKID) contribute to the GTP site. Residues 308–311 (TKID) are G4. The G5 stretch occupies residues 366-368 (SNV). 2 stretches are compositionally biased toward polar residues: residues 573–595 (LLQT…QSTK) and 620–637 (DEAS…SGLQ). Positions 573-669 (LLQTTNNSPM…GACVTPASGC (97 aa)) are disordered. Residue serine 580 is modified to Phosphoserine. Over residues 646–657 (GRRRGGQRHKVK) the composition is skewed to basic residues.

Belongs to the TRAFAC class translation factor GTPase superfamily. Classic translation factor GTPase family. GTPBP1 subfamily. As to quaternary structure, interacts with EXOSC2/RRP4, EXOSC3/RRP40, EXOSC5/RRP46, HNRNPD, HNRNPR and SYNCRIP. Identified in a complex with HNRNPD, HNRNPL, HNRNPQ, HNRNPR, HNRNPU and AANAT mRNA, but does not bind mRNA by itself. As to expression, detected in pineal gland (at protein level).

The protein resides in the cytoplasm. Its function is as follows. Promotes degradation of target mRNA species. Plays a role in the regulation of circadian mRNA stability. Binds GTP and has GTPase activity. This chain is GTP-binding protein 1 (Gtpbp1), found in Rattus norvegicus (Rat).